The chain runs to 100 residues: Urease subunit gamma (100 aa).

This sequence belongs to the urease gamma subunit family. Heterotrimer of UreA (gamma), UreB (beta) and UreC (alpha) subunits. Three heterotrimers associate to form the active enzyme.

Its subcellular location is the cytoplasm. It catalyses the reaction urea + 2 H2O + H(+) = hydrogencarbonate + 2 NH4(+). It participates in nitrogen metabolism; urea degradation; CO(2) and NH(3) from urea (urease route): step 1/1. This is Urease subunit gamma from Halalkalibacterium halodurans (strain ATCC BAA-125 / DSM 18197 / FERM 7344 / JCM 9153 / C-125) (Bacillus halodurans).